Reading from the N-terminus, the 344-residue chain is Outer membrane protein A (344 aa).

The Periplasmic segment spans residues 1 to 14; that stretch reads MKAIFVLNAAPKDN. Residues 15–24 traverse the membrane as a beta stranded segment; that stretch reads TWYAGGKLGW. Topologically, residues 25-49 are extracellular; sequence SQYHDTGFYGNGFQNNNGPTRNDQL. The chain crosses the membrane as a beta stranded span at residues 50-59; sequence GAGAFGGYQV. The Periplasmic segment spans residues 60–62; sequence NPY. A beta stranded membrane pass occupies residues 63–71; the sequence is LGFEMGYDW. Residues 72–89 lie on the Extracellular side of the membrane; the sequence is LGRMAYKGSVDNGAFKAQ. Residues 90 to 100 form a beta stranded membrane-spanning segment; that stretch reads GVQLTAKLGYP. The Periplasmic portion of the chain corresponds to 101–104; the sequence is ITDD. Residues 105–114 traverse the membrane as a beta stranded segment; sequence LDIYTRLGGM. The Extracellular segment spans residues 115–139; the sequence is VWRADSKGNYASTGVSRSEHDTGVS. Residues 140–149 traverse the membrane as a beta stranded segment; that stretch reads PVFAGGVEWA. The Periplasmic portion of the chain corresponds to 150–153; it reads VTRD. Residues 154 to 162 form a beta stranded membrane-spanning segment; that stretch reads IATRLEYQW. Topologically, residues 163 to 179 are extracellular; it reads VNNIGDAGTVGTRPDNG. The chain crosses the membrane as a beta stranded span at residues 180-188; it reads MLSLGVSYR. The Periplasmic segment spans residues 189–344; sequence FGQEDAAPVV…YKEVVTQPQA (156 aa). A run of 4 repeats spans residues 199–200, 201–202, 203–204, and 205–206. Positions 199-206 are 4 X 2 AA tandem repeats of A-P; the sequence is APAPAPAP. The 129-residue stretch at 208–336 folds into the OmpA-like domain; the sequence is VATKHFTLKS…RVEIEVKGYK (129 aa). Cys-309 and Cys-321 are disulfide-bonded.

It belongs to the outer membrane OOP (TC 1.B.6) superfamily. OmpA family. As to quaternary structure, monomer and homodimer.

It localises to the cell outer membrane. Functionally, with TolR probably plays a role in maintaining the position of the peptidoglycan cell wall in the periplasm. Acts as a porin with low permeability that allows slow penetration of small solutes; an internal gate slows down solute passage. Required for conjugation with F-type plasmids; probably serves as the mating receptor on recipient cells. This Klebsiella pneumoniae protein is Outer membrane protein A.